We begin with the raw amino-acid sequence, 309 residues long: Nucleoside kinase (309 aa).

Residues aspartate 16, glycine 42, and asparagine 46 each coordinate substrate. An ATP-binding site is contributed by glutamine 108. Substrate contacts are provided by residues 110 to 112 (SYF) and glutamine 166. ATP-binding positions include asparagine 189 and 217 to 223 (KTYGKEG). Residue aspartate 249 coordinates substrate. Catalysis depends on aspartate 249, which acts as the Proton acceptor.

It belongs to the carbohydrate kinase PfkB family. Homodimer. It depends on Mg(2+) as a cofactor.

Catalyzes the phosphorylation of a wide range of nucleosides to yield nucleoside monophosphates, using ATP, ITP or GTP as phosphate donor. The sequence is that of Nucleoside kinase from Methanothermobacter thermautotrophicus (strain ATCC 29096 / DSM 1053 / JCM 10044 / NBRC 100330 / Delta H) (Methanobacterium thermoautotrophicum).